A 131-amino-acid polypeptide reads, in one-letter code: Small ribosomal subunit protein uS8 (131 aa).

It belongs to the universal ribosomal protein uS8 family. Part of the 30S ribosomal subunit. Contacts proteins S5 and S12.

One of the primary rRNA binding proteins, it binds directly to 16S rRNA central domain where it helps coordinate assembly of the platform of the 30S subunit. In Desulforudis audaxviator (strain MP104C), this protein is Small ribosomal subunit protein uS8.